The sequence spans 290 residues: UPF0761 membrane protein YihY (290 aa).

Transmembrane regions (helical) follow at residues 44 to 64, 104 to 124, 140 to 160, 183 to 203, 210 to 230, and 244 to 264; these read LLSL…FPMF, VGAC…DSAL, FAVY…SLAI, IFPL…VPTI, AIVG…GFAL, and VLAV…IVLL.

Belongs to the UPF0761 family.

The protein localises to the cell inner membrane. This chain is UPF0761 membrane protein YihY, found in Shigella sonnei (strain Ss046).